The following is a 244-amino-acid chain: Prolactin-7D1 (244 aa).

Positions methionine 1–serine 30 are cleaved as a signal peptide. Disulfide bonds link cysteine 99/cysteine 215 and cysteine 232/cysteine 240.

Belongs to the somatotropin/prolactin family.

The protein localises to the secreted. The polypeptide is Prolactin-7D1 (Prl7d1) (Mus musculus (Mouse)).